The following is an 84-amino-acid chain: Large ribosomal subunit protein bL27 (84 aa).

The disordered stretch occupies residues 1–21 (MAHKKGVGSSRNGRDSDGQRL).

The protein belongs to the bacterial ribosomal protein bL27 family.

The chain is Large ribosomal subunit protein bL27 from Trichlorobacter lovleyi (strain ATCC BAA-1151 / DSM 17278 / SZ) (Geobacter lovleyi).